The sequence spans 131 residues: Small ribosomal subunit protein bS6 (131 aa).

The tract at residues Glu98–Glu131 is disordered. Positions Lys104–Phe116 are enriched in basic and acidic residues. Residues Thr120–Glu131 are compositionally biased toward acidic residues.

Belongs to the bacterial ribosomal protein bS6 family.

Its function is as follows. Binds together with bS18 to 16S ribosomal RNA. The chain is Small ribosomal subunit protein bS6 from Citrobacter koseri (strain ATCC BAA-895 / CDC 4225-83 / SGSC4696).